Here is a 129-residue protein sequence, read N- to C-terminus: Small ribosomal subunit protein uS11 (129 aa).

Belongs to the universal ribosomal protein uS11 family. As to quaternary structure, part of the 30S ribosomal subunit. Interacts with proteins S7 and S18. Binds to IF-3.

In terms of biological role, located on the platform of the 30S subunit, it bridges several disparate RNA helices of the 16S rRNA. Forms part of the Shine-Dalgarno cleft in the 70S ribosome. This chain is Small ribosomal subunit protein uS11, found in Desulfovibrio desulfuricans (strain ATCC 27774 / DSM 6949 / MB).